We begin with the raw amino-acid sequence, 145 residues long: Hemoglobin subunit beta-2 (145 aa).

Residues 2–145 (HLTAEDRKEI…GVSHALGHGY (144 aa)) enclose the Globin domain. 2 residues coordinate heme b: His63 and His92.

Belongs to the globin family. In terms of assembly, minor hemoglobin is a tetramer of two alpha-2 chains and two beta-2 chains. In terms of tissue distribution, red blood cells.

Involved in oxygen transport from the lung to the various peripheral tissues. This chain is Hemoglobin subunit beta-2 (HBB2), found in Triturus cristatus (Great crested newt).